The following is a 397-amino-acid chain: Putative protein FAM47D (397 aa).

Belongs to the FAM47 family.

This is Putative protein FAM47D (FAM47DP) from Homo sapiens (Human).